Reading from the N-terminus, the 407-residue chain is Digeranylgeranylglycerophospholipid reductase (407 aa).

FAD is bound by residues Ala-15, Glu-34, Cys-45, Ala-46, Gly-48, Arg-99, Ala-123, Asp-281, Gly-293, and Ile-294.

Belongs to the geranylgeranyl reductase family. DGGGPL reductase subfamily. The cofactor is FAD.

The catalysed reaction is a 2,3-bis-O-phytanyl-sn-glycerol 1-phospholipid + 8 oxidized 2[4Fe-4S]-[ferredoxin] = a 2,3-bis-O-(geranylgeranyl)-sn-glycerol 1-phospholipid + 8 reduced 2[4Fe-4S]-[ferredoxin] + 16 H(+). It carries out the reaction 2,3-bis-O-(phytanyl)-sn-glycerol 1-phosphate + 8 oxidized 2[4Fe-4S]-[ferredoxin] = 2,3-bis-O-(geranylgeranyl)-sn-glycerol 1-phosphate + 8 reduced 2[4Fe-4S]-[ferredoxin] + 16 H(+). The enzyme catalyses a 2,3-bis-O-phytanyl-sn-glycerol 1-phospholipid + 8 A = a 2,3-bis-O-(geranylgeranyl)-sn-glycerol 1-phospholipid + 8 AH2. It catalyses the reaction CDP-2,3-bis-O-(geranylgeranyl)-sn-glycerol + 8 AH2 = CDP-2,3-bis-O-(phytanyl)-sn-glycerol + 8 A. The catalysed reaction is archaetidylserine + 8 AH2 = 2,3-bis-O-phytanyl-sn-glycero-3-phospho-L-serine + 8 A. It participates in membrane lipid metabolism; glycerophospholipid metabolism. Functionally, is involved in the reduction of 2,3-digeranylgeranylglycerophospholipids (unsaturated archaeols) into 2,3-diphytanylglycerophospholipids (saturated archaeols) in the biosynthesis of archaeal membrane lipids. Catalyzes the formation of archaetidic acid (2,3-di-O-phytanyl-sn-glyceryl phosphate) from 2,3-di-O-geranylgeranylglyceryl phosphate (DGGGP) via the hydrogenation of each double bond of the isoprenoid chains. Requires the adjacently encoded ferredoxin MA_1485 as the electron donor. Is also probably able to reduce double bonds of geranyl groups in CDP-2,3-bis-O-(geranylgeranyl)-sn-glycerol and archaetidylserine, thus acting at various stages in the biosynthesis of archaeal membrane lipids. In Methanosarcina acetivorans (strain ATCC 35395 / DSM 2834 / JCM 12185 / C2A), this protein is Digeranylgeranylglycerophospholipid reductase.